Here is a 635-residue protein sequence, read N- to C-terminus: Protein phosphatase PP2A regulatory subunit A (635 aa).

The segment covering 1–27 (MSGARSTTAGAVPSAATTSTTSTTSNS) has biased composition (low complexity). Positions 1–33 (MSGARSTTAGAVPSAATTSTTSTTSNSKDSDSN) are disordered. 15 HEAT repeats span residues 34-72 (ESLY…GPER), 73-111 (TRNE…GGPQ), 112-150 (YATI…SQEQ), 151-189 (LFSD…KDDS), 190-228 (LRKN…TQNL), 229-273 (GLST…NAKG), 274-316 (DESH…SNQA), 317-356 (YIDE…DPSI), 357-395 (ILNK…NKDQ), 396-434 (VINN…GIEL), 435-473 (LSDS…GMQF), 474-512 (FDQQ…GSDW), 513-553 (CRDE…SLDV), 554-598 (VTEQ…YDAL), and 599-632 (IKNT…CQEL).

The protein belongs to the phosphatase 2A regulatory subunit A family. As to quaternary structure, PP2A exists in several trimeric forms, all of which consist of a core composed of a catalytic subunit associated with a 65 kDa regulatory subunit (PR65) (subunit A). The core complex associates with a third, variable subunit (subunit B), which confers distinct properties to the holoenzyme.

In terms of biological role, phosphatase 2A affects a variety of biological processes in the cell such as transcription, cell cycle progression and cellular morphogenesis, and provides an initial identification of critical substrates for this phosphatase. The regulatory subunit may direct the catalytic subunit to distinct, albeit overlapping, subsets of substrates. The chain is Protein phosphatase PP2A regulatory subunit A (TPD3) from Saccharomyces cerevisiae (strain ATCC 204508 / S288c) (Baker's yeast).